The primary structure comprises 366 residues: Methylthioribose-1-phosphate isomerase (366 aa).

Substrate is bound by residues 53-55 (RGA), Arg90, and Gln203. The active-site Proton donor is the Asp244. 254 to 255 (NK) contributes to the substrate binding site.

It belongs to the eIF-2B alpha/beta/delta subunits family. MtnA subfamily.

The enzyme catalyses 5-(methylsulfanyl)-alpha-D-ribose 1-phosphate = 5-(methylsulfanyl)-D-ribulose 1-phosphate. It functions in the pathway amino-acid biosynthesis; L-methionine biosynthesis via salvage pathway; L-methionine from S-methyl-5-thio-alpha-D-ribose 1-phosphate: step 1/6. Its function is as follows. Catalyzes the interconversion of methylthioribose-1-phosphate (MTR-1-P) into methylthioribulose-1-phosphate (MTRu-1-P). In Methylocella silvestris (strain DSM 15510 / CIP 108128 / LMG 27833 / NCIMB 13906 / BL2), this protein is Methylthioribose-1-phosphate isomerase.